We begin with the raw amino-acid sequence, 332 residues long: MSRILDNEQMMDEEMVERTLRPQYLQEYIGQDKVKNQLKIFIEAAKLRDEALDHALLFGPPGLGKTTMAFVIANELGVNIKQTSGPVIEKAGDLVAILNDLEPGDVLFIDEIHRLPMAVEEVLYSAMEDFYIDIMIGSGDANRSVHLDLPPFTLIGATTRAGMLSNPLRARFGITGHMEYYEEADLTEIVERTAEIFEMDITHEAAKELALRSRGTPRIANRLLKRVRDYAQIMGNGLIDETITDQALSMLDVDHEGLDYVDQKILRTMIEMYGGGPVGLGTLSVNIAEERETVEDMYEPYLIQKGFIMRTRTGRVATRKAYEHLGYEYMEK.

The segment at 1–181 is large ATPase domain (RuvB-L); it reads MSRILDNEQM…FGITGHMEYY (181 aa). Residues Leu20, Arg21, Gly62, Lys65, Thr66, Thr67, 128–130, Arg171, Tyr181, and Arg218 contribute to the ATP site; that span reads EDF. Residue Thr66 coordinates Mg(2+). The segment at 182–252 is small ATPAse domain (RuvB-S); it reads EEADLTEIVE…ITDQALSMLD (71 aa). The tract at residues 255–332 is head domain (RuvB-H); it reads HEGLDYVDQK…EHLGYEYMEK (78 aa). DNA is bound by residues Arg291, Arg310, Arg312, and Arg315.

This sequence belongs to the RuvB family. As to quaternary structure, homohexamer. Forms an RuvA(8)-RuvB(12)-Holliday junction (HJ) complex. HJ DNA is sandwiched between 2 RuvA tetramers; dsDNA enters through RuvA and exits via RuvB. An RuvB hexamer assembles on each DNA strand where it exits the tetramer. Each RuvB hexamer is contacted by two RuvA subunits (via domain III) on 2 adjacent RuvB subunits; this complex drives branch migration. In the full resolvosome a probable DNA-RuvA(4)-RuvB(12)-RuvC(2) complex forms which resolves the HJ.

The protein localises to the cytoplasm. The enzyme catalyses ATP + H2O = ADP + phosphate + H(+). In terms of biological role, the RuvA-RuvB-RuvC complex processes Holliday junction (HJ) DNA during genetic recombination and DNA repair, while the RuvA-RuvB complex plays an important role in the rescue of blocked DNA replication forks via replication fork reversal (RFR). RuvA specifically binds to HJ cruciform DNA, conferring on it an open structure. The RuvB hexamer acts as an ATP-dependent pump, pulling dsDNA into and through the RuvAB complex. RuvB forms 2 homohexamers on either side of HJ DNA bound by 1 or 2 RuvA tetramers; 4 subunits per hexamer contact DNA at a time. Coordinated motions by a converter formed by DNA-disengaged RuvB subunits stimulates ATP hydrolysis and nucleotide exchange. Immobilization of the converter enables RuvB to convert the ATP-contained energy into a lever motion, pulling 2 nucleotides of DNA out of the RuvA tetramer per ATP hydrolyzed, thus driving DNA branch migration. The RuvB motors rotate together with the DNA substrate, which together with the progressing nucleotide cycle form the mechanistic basis for DNA recombination by continuous HJ branch migration. Branch migration allows RuvC to scan DNA until it finds its consensus sequence, where it cleaves and resolves cruciform DNA. This Streptococcus gordonii (strain Challis / ATCC 35105 / BCRC 15272 / CH1 / DL1 / V288) protein is Holliday junction branch migration complex subunit RuvB.